A 362-amino-acid chain; its full sequence is MSNASTVETSDVERIAVNCSKSGMHNYIFIAIPIIYSTIFVVGVFGNSMVVIVIYSYMKMKTVASIFLMNLALSDLCFVITLPLWAAYTAMHYHWPFGNFLCKVASTAITLNLYTTVFLLTCLSIDRYSAIVHPMKSRIWRTAMVARLTCVGIWLVAFLASMPSIIYRQIYLFHDTNQTVCAIVYDSGHIYFMVGMSLAKNIVGFLIPFLIILTSYTLIGKTLKEVYRAQRARNDDIFKMIVAVVLLFFFCWIPYQVFTFLDVLIQMDVIQNCKMYDIVDTGMPITICIAYFNSCLNPFLYGFFGKNFRKHFLQLIKYIPPKMRTHASVNTKSSLVSSSLSDTKRASKKIALQMTDNEEHCK.

Topologically, residues 1-26 are extracellular; it reads MSNASTVETSDVERIAVNCSKSGMHN. Asparagine 3 and asparagine 18 each carry an N-linked (GlcNAc...) asparagine glycan. Disulfide bonds link cysteine 19–cysteine 273 and cysteine 102–cysteine 181. A helical membrane pass occupies residues 27–56; it reads YIFIAIPIIYSTIFVVGVFGNSMVVIVIYS. The Cytoplasmic segment spans residues 57-62; that stretch reads YMKMKT. The helical transmembrane segment at 63-90 threads the bilayer; the sequence is VASIFLMNLALSDLCFVITLPLWAAYTA. The Extracellular portion of the chain corresponds to 91-99; sequence MHYHWPFGN. A helical transmembrane segment spans residues 100-126; that stretch reads FLCKVASTAITLNLYTTVFLLTCLSID. The Cytoplasmic segment spans residues 127–142; it reads RYSAIVHPMKSRIWRT. Residues 143–166 traverse the membrane as a helical segment; sequence AMVARLTCVGIWLVAFLASMPSII. The Extracellular segment spans residues 167–191; sequence YRQIYLFHDTNQTVCAIVYDSGHIY. Arginine 168 provides a ligand contact to angiotensin II. N-linked (GlcNAc...) asparagine glycosylation occurs at asparagine 177. The angiotensin II site is built by tyrosine 185 and lysine 200. Residues 192–217 form a helical membrane-spanning segment; that stretch reads FMVGMSLAKNIVGFLIPFLIILTSYT. At 218 to 238 the chain is on the cytoplasmic side; sequence LIGKTLKEVYRAQRARNDDIF. The chain crosses the membrane as a helical span at residues 239–267; it reads KMIVAVVLLFFFCWIPYQVFTFLDVLIQM. Residues 268–277 are Extracellular-facing; that stretch reads DVIQNCKMYD. A helical transmembrane segment spans residues 278 to 303; that stretch reads IVDTGMPITICIAYFNSCLNPFLYGF. Residues 304 to 362 are Cytoplasmic-facing; sequence FGKNFRKHFLQLIKYIPPKMRTHASVNTKSSLVSSSLSDTKRASKKIALQMTDNEEHCK. The S-palmitoyl cysteine moiety is linked to residue cysteine 361.

The protein belongs to the G-protein coupled receptor 1 family. C-terminal Ser or Thr residues may be phosphorylated. Expressed in lung, liver, kidney, and spleen, with highest expression in the heart.

The protein resides in the cell membrane. In terms of biological role, receptor for angiotensin II, a vasoconstricting peptide, which acts as a key regulator of blood pressure and sodium retention by the kidney. The activated receptor in turn couples to G-alpha proteins G(q) (GNAQ, GNA11, GNA14 or GNA15) and thus activates phospholipase C and increases the cytosolic Ca(2+) concentrations, which in turn triggers cellular responses such as stimulation of protein kinase C. This chain is Type-1 angiotensin II receptor A (agtr1-a), found in Xenopus laevis (African clawed frog).